We begin with the raw amino-acid sequence, 96 residues long: Large ribosomal subunit protein bL25 (96 aa).

This sequence belongs to the bacterial ribosomal protein bL25 family. Part of the 50S ribosomal subunit; part of the 5S rRNA/L5/L18/L25 subcomplex. Contacts the 5S rRNA. Binds to the 5S rRNA independently of L5 and L18.

In terms of biological role, this is one of the proteins that binds to the 5S RNA in the ribosome where it forms part of the central protuberance. This is Large ribosomal subunit protein bL25 from Buchnera aphidicola subsp. Schizaphis graminum (strain Sg).